We begin with the raw amino-acid sequence, 333 residues long: MRVTVLVGGVGGAHFLLGVQQLLGLGQFGPQQCPDTLTTGHELTAVVNIGDDAWIHGLRVCPDLDTCMYTLGDGIDPQRGWGHRDETWHAKEELARYGVQPDWFELGDRDLATHLVRTQMLNAGYRLSQITTALCDRWQPGARLVPASDDRCETHVVITDPINDSRRAIHFQEWWVRYRAQVPTHSFAYVGAEKASAATEAVAAIADADVILVAPSNPVVSIGAILAIPGIRGALRTTTAPVVGYSPIIDGKPLRGMADKCLTVIGVQSTATAVGQHYGARRTTGILDCWLVHEDDHAEIEGVAVRSIPLLMSSPKTTADMVNIGLQLAGVSA.

D65 contributes to the 7,8-didemethyl-8-hydroxy-5-deazariboflavin binding site.

The protein belongs to the CofD family. As to quaternary structure, homodimer. Mg(2+) serves as cofactor.

It carries out the reaction enolpyruvoyl-2-diphospho-5'-guanosine + 7,8-didemethyl-8-hydroxy-5-deazariboflavin = dehydro coenzyme F420-0 + GMP + H(+). Its pathway is cofactor biosynthesis; coenzyme F420 biosynthesis. Catalyzes the transfer of the phosphoenolpyruvate moiety from enoylpyruvoyl-2-diphospho-5'-guanosine (EPPG) to 7,8-didemethyl-8-hydroxy-5-deazariboflavin (FO) with the formation of dehydro coenzyme F420-0 and GMP. The protein is Phosphoenolpyruvate transferase of Mycobacterium leprae (strain TN).